Consider the following 183-residue polypeptide: Crossover junction endodeoxyribonuclease RuvC (183 aa).

Active-site residues include D7, E66, and D138. Mg(2+)-binding residues include D7, E66, and D138.

The protein belongs to the RuvC family. Homodimer which binds Holliday junction (HJ) DNA. The HJ becomes 2-fold symmetrical on binding to RuvC with unstacked arms; it has a different conformation from HJ DNA in complex with RuvA. In the full resolvosome a probable DNA-RuvA(4)-RuvB(12)-RuvC(2) complex forms which resolves the HJ. Mg(2+) serves as cofactor.

It localises to the cytoplasm. It catalyses the reaction Endonucleolytic cleavage at a junction such as a reciprocal single-stranded crossover between two homologous DNA duplexes (Holliday junction).. Functionally, the RuvA-RuvB-RuvC complex processes Holliday junction (HJ) DNA during genetic recombination and DNA repair. Endonuclease that resolves HJ intermediates. Cleaves cruciform DNA by making single-stranded nicks across the HJ at symmetrical positions within the homologous arms, yielding a 5'-phosphate and a 3'-hydroxyl group; requires a central core of homology in the junction. The consensus cleavage sequence is 5'-(A/T)TT(C/G)-3'. Cleavage occurs on the 3'-side of the TT dinucleotide at the point of strand exchange. HJ branch migration catalyzed by RuvA-RuvB allows RuvC to scan DNA until it finds its consensus sequence, where it cleaves and resolves the cruciform DNA. In Burkholderia ambifaria (strain ATCC BAA-244 / DSM 16087 / CCUG 44356 / LMG 19182 / AMMD) (Burkholderia cepacia (strain AMMD)), this protein is Crossover junction endodeoxyribonuclease RuvC.